Reading from the N-terminus, the 566-residue chain is Sodium-dependent high-affinity dicarboxylate transporter 3 (566 aa).

Transmembrane regions (helical) follow at residues 55-75 (LVLVLTPLFFGQMLNWEGPEW), 92-112 (VMPLAVTAMLPVVLFPLVGVL), 123-139 (NDTNFLFIGGLIMAAAV), 162-182 (WIMLGFMTVTALLSSFISNTA), 219-239 (MATGLVLSICFAANIGGTGTA), 268-288 (WIFFAYPLMLLCLFVAWMTLV), 329-349 (ILLSLWVFRNPGVVPGFGVFF), 352-372 (GAYTDATSAMIVAFLLFVLPS), 400-420 (ETFPWSVVLLLGGGFALAAGV), 439-459 (LPLWILQLLTMLIAMVITNIC), 496-516 (FAFIFPVGTPPNAIVFGSGMV), and 521-541 (MAFVGGIISLELLVLTVLYMN).

The protein belongs to the SLC13A/DASS transporter (TC 2.A.47) family. NADC subfamily. In terms of tissue distribution, nad-1 and nad-2 are coexpressed in the intestinal tract from early larvae to adults, expression is from the pharynx through to the anus. Expression level is significantly greater in the anterior half of the intestine than in the posterior half.

The protein resides in the membrane. High-affinity sodium-dicarboxylate cotransporter that accepts a range of tricarboxylic acid-cycle intermediates with 4-5 carbon atoms. There is no interaction with monocarboxylates. Plays a role in the regulation of life span. In Caenorhabditis elegans, this protein is Sodium-dependent high-affinity dicarboxylate transporter 3 (nac-3).